The sequence spans 176 residues: Vitamin K epoxide reductase complex subunit 1-like protein 1 (176 aa).

The Cytoplasmic segment spans residues 1-13; the sequence is MAAPVLLRVSVPR. The chain crosses the membrane as a helical span at residues 14–36; sequence WERVARYAVCAAGILLSIYAYHV. The Lumenal segment spans residues 37-87; sequence EREKERDPEHRALCDLGPWVKCSAALASRWGRGFGLLGSIFGKDGVLNQPN. Cysteines 50 and 58 form a disulfide. Residue N87 coordinates (S)-warfarin. A helical membrane pass occupies residues 88 to 102; that stretch reads SVFGLIFYILQLLLG. At 103–107 the chain is on the cytoplasmic side; sequence MTASA. Residues 108 to 135 traverse the membrane as a helical segment; the sequence is VAALVLMTSSIVSVVGSLYLAYILYFVL. Topologically, residues 136 to 138 are lumenal; the sequence is KEF. The cysteines at positions 139 and 142 are disulfide-linked. Residues 139–160 traverse the membrane as a helical segment; that stretch reads CIICVTTYVLNFLLLIINYKRL. 2 residues coordinate phylloquinone: C142 and Y146. Residue Y146 participates in (S)-warfarin binding. Topologically, residues 161–176 are cytoplasmic; the sequence is VYLNEAWKRQLQPKED.

The protein belongs to the VKOR family. In terms of tissue distribution, detected in testis and lung.

The protein localises to the endoplasmic reticulum membrane. It carries out the reaction phylloquinone + [protein]-disulfide + H2O = 2,3-epoxyphylloquinone + [protein]-dithiol. It catalyses the reaction phylloquinol + [protein]-disulfide = phylloquinone + [protein]-dithiol. With respect to regulation, inhibited by warfarin (coumadin). Warfarin locks VKORC1 in both redox states into the closed conformation. Involved in vitamin K metabolism. Can reduce inactive vitamin K 2,3-epoxide to active vitamin K, and may contribute to vitamin K-mediated protection against oxidative stress. Plays a role in vitamin K-dependent gamma-carboxylation of Glu residues in target proteins. The polypeptide is Vitamin K epoxide reductase complex subunit 1-like protein 1 (Vkorc1l1) (Mus musculus (Mouse)).